Here is a 181-residue protein sequence, read N- to C-terminus: Ubiquitin-like protein 4B (181 aa).

The Ubiquitin-like domain maps to 1 to 76 (MWLTVKLLLG…LNVIIRPLEK (76 aa)). Residues 139–181 (PEGKHSGATGSTRESKGDMEPRRNMKCNLAHKDGFKREKSPGK) form a disordered region. Composition is skewed to basic and acidic residues over residues 151–161 (RESKGDMEPRR) and 168–181 (AHKD…SPGK).

The protein localises to the cytoplasm. This is Ubiquitin-like protein 4B (UBL4B) from Monodelphis domestica (Gray short-tailed opossum).